Reading from the N-terminus, the 530-residue chain is Bifunctional purine biosynthesis protein PurH (530 aa).

Residues M1 to T147 enclose the MGS-like domain.

The protein belongs to the PurH family.

The catalysed reaction is (6R)-10-formyltetrahydrofolate + 5-amino-1-(5-phospho-beta-D-ribosyl)imidazole-4-carboxamide = 5-formamido-1-(5-phospho-D-ribosyl)imidazole-4-carboxamide + (6S)-5,6,7,8-tetrahydrofolate. It carries out the reaction IMP + H2O = 5-formamido-1-(5-phospho-D-ribosyl)imidazole-4-carboxamide. It participates in purine metabolism; IMP biosynthesis via de novo pathway; 5-formamido-1-(5-phospho-D-ribosyl)imidazole-4-carboxamide from 5-amino-1-(5-phospho-D-ribosyl)imidazole-4-carboxamide (10-formyl THF route): step 1/1. The protein operates within purine metabolism; IMP biosynthesis via de novo pathway; IMP from 5-formamido-1-(5-phospho-D-ribosyl)imidazole-4-carboxamide: step 1/1. The sequence is that of Bifunctional purine biosynthesis protein PurH from Neisseria meningitidis serogroup A / serotype 4A (strain DSM 15465 / Z2491).